Here is a 289-residue protein sequence, read N- to C-terminus: tRNA (adenine(58)-N(1))-methyltransferase catalytic subunit TRMT61A (289 aa).

Ser2 is modified (N-acetylserine). Substrate-binding positions include 20-22 (LGH), 35-42 (QTQTRHGV), 64-65 (GW), 85-89 (QILYS), and 110-117 (SGTGSGSV). S-adenosyl-L-methionine is bound by residues Leu87, 114 to 116 (SGS), Glu135, Arg140, 163 to 164 (DV), and Asp181. Substrate-binding positions include 180–183 (LDIP) and 205–212 (SFSPCIEQ). The interval 245–272 (LPPPDLGTGTDGPAGSDTSPFRSGTPMK) is disordered. Low complexity predominate over residues 250 to 259 (LGTGTDGPAG). A Phosphoserine modification is found at Ser263. Position 278 (Thr278) interacts with substrate.

This sequence belongs to the class I-like SAM-binding methyltransferase superfamily. TRM61 family. As to quaternary structure, heterotetramer; composed of two copies of TRMT6 and two copies of TRMT61A.

The protein resides in the nucleus. The enzyme catalyses adenosine(58) in tRNA + S-adenosyl-L-methionine = N(1)-methyladenosine(58) in tRNA + S-adenosyl-L-homocysteine + H(+). It catalyses the reaction an adenosine in mRNA + S-adenosyl-L-methionine = an N(1)-methyladenosine in mRNA + S-adenosyl-L-homocysteine + H(+). Catalytic subunit of tRNA (adenine-N(1)-)-methyltransferase, which catalyzes the formation of N(1)-methyladenine at position 58 (m1A58) in initiator methionyl-tRNA. Catalytic subunit of mRNA N(1)-methyltransferase complex, which mediates methylation of adenosine residues at the N(1) position of a small subset of mRNAs: N(1) methylation takes place in tRNA T-loop-like structures of mRNAs and is only present at low stoichiometries. This is tRNA (adenine(58)-N(1))-methyltransferase catalytic subunit TRMT61A (TRMT61A) from Homo sapiens (Human).